A 144-amino-acid polypeptide reads, in one-letter code: Sec-independent protein translocase protein TatB (144 aa).

Residues 1-21 (MFEIGFWELVLVAIIGIVVVG) form a helical membrane-spanning segment. Residues 97–144 (KMIDEPPYQEPPPAAHSVQTDAEAYRDTGIEPADKSSSPEHHHDDAAR) are disordered. The segment covering 119–144 (EAYRDTGIEPADKSSSPEHHHDDAAR) has biased composition (basic and acidic residues).

It belongs to the TatB family. As to quaternary structure, the Tat system comprises two distinct complexes: a TatABC complex, containing multiple copies of TatA, TatB and TatC subunits, and a separate TatA complex, containing only TatA subunits. Substrates initially bind to the TatABC complex, which probably triggers association of the separate TatA complex to form the active translocon.

Its subcellular location is the cell inner membrane. Its function is as follows. Part of the twin-arginine translocation (Tat) system that transports large folded proteins containing a characteristic twin-arginine motif in their signal peptide across membranes. Together with TatC, TatB is part of a receptor directly interacting with Tat signal peptides. TatB may form an oligomeric binding site that transiently accommodates folded Tat precursor proteins before their translocation. The protein is Sec-independent protein translocase protein TatB of Dichelobacter nodosus (strain VCS1703A).